The sequence spans 123 residues: MAPPGGKINRPRTELKKKLFKRRRVLSRDRRRKRQVVGAVIDEGLTTKHHLKKRASSARANITLSGKKRRKLLQQIRLAQKEKAAMEVEAPSKSTRTSQPQPKQQKKIKAPQDVAMEDLEDKS.

2 disordered regions span residues 1–33 (MAPP…RRRK) and 82–123 (EKAA…EDKS). Basic residues predominate over residues 18-33 (KLFKRRRVLSRDRRRK).

This is an uncharacterized protein from Mus musculus (Mouse).